Consider the following 553-residue polypeptide: Membrane protein insertase YidC (553 aa).

The next 5 helical transmembrane spans lie at 7–24 (VLWV…DNWQ), 365–385 (WGWA…PLSA), 435–455 (LPVV…LASV), 474–494 (PYFI…SLNP), and 509–529 (PIAF…YYVV).

Belongs to the OXA1/ALB3/YidC family. Type 1 subfamily. In terms of assembly, interacts with the Sec translocase complex via SecD. Specifically interacts with transmembrane segments of nascent integral membrane proteins during membrane integration.

It is found in the cell inner membrane. In terms of biological role, required for the insertion and/or proper folding and/or complex formation of integral membrane proteins into the membrane. Involved in integration of membrane proteins that insert both dependently and independently of the Sec translocase complex, as well as at least some lipoproteins. Aids folding of multispanning membrane proteins. The sequence is that of Membrane protein insertase YidC from Burkholderia multivorans (strain ATCC 17616 / 249).